Consider the following 479-residue polypeptide: MGIKGLTKFIADTAPNAIKEIKIENLMGRVVAIDASMSLYQFIIAIRDGDQYGNLMNEAGETTSHISGLMSRTIKLMENGLKPIYVFDGAPPELKGSELEKRGEKRQKAEELLLKAKEEGNLEEIKKQSGRTVRVTKKQNEEAKKLLTLMGIPVIESPCEAEAQCAFLTKYDMAHATATEDADALVFGTKILIRNLNANASSNKNKNKNSSKRGYILTEINLEQVLKGLKLTMDEFIDFCILCGCDYCDTIKGIGSKTAYNLIKEYNCIENIIKNIDQNKYQVPDNFKYVEARQSFINPKVLEKSEVKIDWCEPKIEELKTFLIKEHNFNEVRVTNYITRLLKARKVTTQRRLDTFFTTCTKKSTKLIIEESQKELLKAKGKGKKRELNDNSTKLNAKKKKTNIKDEKKNTDKMDELKNKSDENFVKDEENDQDDYDQNLFDEKTNSDSGNIKNENIKEDISSNDITMDIPKCTNDIVC.

The interval 1 to 106 (MGIKGLTKFI…SELEKRGEKR (106 aa)) is N-domain. Aspartate 34 provides a ligand contact to Mg(2+). 2 residues coordinate DNA: arginine 47 and arginine 72. Positions 88, 160, 162, 181, and 183 each coordinate Mg(2+). Positions 124–266 (EIKKQSGRTV…KTAYNLIKEY (143 aa)) are I-domain. Position 160 (glutamate 160) interacts with DNA. Residues glycine 244 and aspartate 246 each coordinate DNA. Residue aspartate 246 participates in Mg(2+) binding. The interaction with PCNA stretch occupies residues 349 to 357 (TQRRLDTFF). The disordered stretch occupies residues 379–455 (AKGKGKKREL…NSDSGNIKNE (77 aa)). Positions 403–428 (NIKDEKKNTDKMDELKNKSDENFVKD) are enriched in basic and acidic residues.

Belongs to the XPG/RAD2 endonuclease family. FEN1 subfamily. Interacts with PCNA. Three molecules of FEN1 bind to one PCNA trimer with each molecule binding to one PCNA monomer. PCNA stimulates the nuclease activity without altering cleavage specificity. Mg(2+) serves as cofactor. In terms of processing, phosphorylated. Phosphorylation upon DNA damage induces relocalization to the nuclear plasma.

It is found in the nucleus. The protein localises to the nucleolus. Its subcellular location is the nucleoplasm. It localises to the mitochondrion. In terms of biological role, structure-specific nuclease with 5'-flap endonuclease and 5'-3' exonuclease activities involved in DNA replication and repair. During DNA replication, cleaves the 5'-overhanging flap structure that is generated by displacement synthesis when DNA polymerase encounters the 5'-end of a downstream Okazaki fragment. It enters the flap from the 5'-end and then tracks to cleave the flap base, leaving a nick for ligation. Also involved in the long patch base excision repair (LP-BER) pathway, by cleaving within the apurinic/apyrimidinic (AP) site-terminated flap. Acts as a genome stabilization factor that prevents flaps from equilibrating into structures that lead to duplications and deletions. Also possesses 5'-3' exonuclease activity on nicked or gapped double-stranded DNA, and exhibits RNase H activity. Also involved in replication and repair of rDNA and in repairing mitochondrial DNA. The polypeptide is Flap endonuclease 1 (Plasmodium chabaudi chabaudi).